A 138-amino-acid chain; its full sequence is Basic phospholipase A2 B (138 aa).

Residues 1 to 16 (MRALWIVAVLLLGVEG) form the signal peptide. Cystine bridges form between Cys-42/Cys-131, Cys-44/Cys-60, Cys-59/Cys-111, Cys-65/Cys-138, Cys-66/Cys-104, Cys-73/Cys-97, and Cys-91/Cys-102. Positions 43, 45, and 47 each coordinate Ca(2+). Residue His-63 is part of the active site. Asp-64 is a binding site for Ca(2+). Residue Asp-105 is part of the active site.

It belongs to the phospholipase A2 family. Group II subfamily. D49 sub-subfamily. Ca(2+) is required as a cofactor. Expressed by the venom gland.

The protein resides in the secreted. It carries out the reaction a 1,2-diacyl-sn-glycero-3-phosphocholine + H2O = a 1-acyl-sn-glycero-3-phosphocholine + a fatty acid + H(+). Functionally, snake venom phospholipase A2 (PLA2) that shows potent hemolytic activity, and exhibits medium anticoagulant effects by binding to factor Xa (F10) and inhibiting the prothrombinase activity (IC(50) is 90 nM). It is one of the few phospholipases A2 capable of hydrolyzing the phospholipids of E.coli membranes in the presence of a bactericidal/permeability-increasing protein (BPI) of neutrophils. PLA2 catalyzes the calcium-dependent hydrolysis of the 2-acyl groups in 3-sn-phosphoglycerides. The protein is Basic phospholipase A2 B of Gloydius halys (Chinese water mocassin).